The chain runs to 313 residues: WD repeat-containing protein 82-A (313 aa).

WD repeat units lie at residues glutamate 19–threonine 58, glycine 105–leucine 144, histidine 146–phenylalanine 184, aspartate 192–threonine 231, asparagine 236–valine 276, and lysine 280–aspartate 313.

It belongs to the WD repeat SWD2 family. In terms of assembly, component of the SET1/COMPASS complex. Component of the PNUTS-PP1 phosphatase complex.

The protein resides in the nucleus. It is found in the chromosome. Its subcellular location is the cytoplasm. Functionally, regulatory component of the SET1/COMPASS complex implicated in the tethering of this complex to transcriptional start sites of active genes. Facilitates histone H3 'Lys-4' methylation (H3K4me) via recruitment of the SETD1A or SETD1B to the 'Ser-5' phosphorylated C-terminal domain (CTD) of RNA polymerase II large subunit (POLR2A). Component of the PNUTS-PP1 protein phosphatase complex, a protein phosphatase 1 (PP1) complex that promotes RNA polymerase II transcription pause-release, allowing transcription elongation. This is WD repeat-containing protein 82-A (wdr82-a) from Xenopus laevis (African clawed frog).